Here is a 327-residue protein sequence, read N- to C-terminus: uncharacterized protein (327 aa).

The S4 RNA-binding domain maps to 12-84 (MRIDRYLTQQ…IPITILYEDD (73 aa)). Aspartate 137 is a catalytic residue.

This sequence belongs to the pseudouridine synthase RluA family.

The enzyme catalyses a uridine in RNA = a pseudouridine in RNA. This is an uncharacterized protein from Chlorobaculum parvum (strain DSM 263 / NCIMB 8327) (Chlorobium vibrioforme subsp. thiosulfatophilum).